The following is a 383-amino-acid chain: S-adenosylmethionine synthase 1 (383 aa).

Position 15 (H15) interacts with ATP. D17 is a binding site for Mg(2+). E43 serves as a coordination point for K(+). E56 and Q99 together coordinate L-methionine. Positions 99-109 (QSPDINLGVSR) are flexible loop. ATP-binding positions include 162–164 (DGK), 228–229 (RF), D237, 243–244 (RK), A260, and K264. D237 serves as a coordination point for L-methionine. K268 serves as a coordination point for L-methionine.

The protein belongs to the AdoMet synthase family. As to quaternary structure, homotetramer; dimer of dimers. Mg(2+) serves as cofactor. K(+) is required as a cofactor.

The protein resides in the cytoplasm. The enzyme catalyses L-methionine + ATP + H2O = S-adenosyl-L-methionine + phosphate + diphosphate. It participates in amino-acid biosynthesis; S-adenosyl-L-methionine biosynthesis; S-adenosyl-L-methionine from L-methionine: step 1/1. Functionally, catalyzes the formation of S-adenosylmethionine (AdoMet) from methionine and ATP. The overall synthetic reaction is composed of two sequential steps, AdoMet formation and the subsequent tripolyphosphate hydrolysis which occurs prior to release of AdoMet from the enzyme. The sequence is that of S-adenosylmethionine synthase 1 from Rhodopseudomonas palustris (strain BisB18).